Here is a 215-residue protein sequence, read N- to C-terminus: UPF0502 protein PSEEN2299 (215 aa).

The protein belongs to the UPF0502 family.

The chain is UPF0502 protein PSEEN2299 from Pseudomonas entomophila (strain L48).